The sequence spans 606 residues: uncharacterized protein (606 aa).

This is an uncharacterized protein from Sinorhizobium fredii (strain NBRC 101917 / NGR234).